A 326-amino-acid polypeptide reads, in one-letter code: tRNA-modifying protein YgfZ (326 aa).

Residues tryptophan 27 and tryptophan 189 each contribute to the folate site.

Belongs to the tRNA-modifying YgfZ family.

It is found in the cytoplasm. Functionally, folate-binding protein involved in regulating the level of ATP-DnaA and in the modification of some tRNAs. It is probably a key factor in regulatory networks that act via tRNA modification, such as initiation of chromosomal replication. The sequence is that of tRNA-modifying protein YgfZ from Escherichia coli O6:K15:H31 (strain 536 / UPEC).